A 392-amino-acid chain; its full sequence is Antitrypsin (392 aa).

The signal sequence occupies residues 1-16 (MKTIICLFTIAIAAMA).

This sequence belongs to the serpin family. In terms of tissue distribution, hemolymph.

The protein localises to the secreted. Functionally, may play a role in the prophenoloxidase activating system in the silkworm hemolymph. This chain is Antitrypsin, found in Bombyx mori (Silk moth).